Consider the following 623-residue polypeptide: Actin-related protein 8 (623 aa).

Residues 1–24 are compositionally biased toward basic and acidic residues; the sequence is MTQTDRDAENGRDREKDREKEQQR. The segment at 1 to 29 is disordered; it reads MTQTDRDAENGRDREKDREKEQQRGVKRP. 283–286 lines the ATP pocket; that stretch reads DVGD. The segment covering 428 to 438 has biased composition (low complexity); the sequence is TQSKQDQSSKA. A disordered region spans residues 428-458; it reads TQSKQDQSSKASADRKSFPKPSSFEGESSVC.

Belongs to the actin family. ARP8 subfamily. As to quaternary structure, component of the chromatin remodeling INO80 complex; specifically part of a complex module associated with the DBINO domain of INO80. Exists as monomers and dimers, but the dimer is most probably the biologically relevant form required for stable interactions with histones that exploits the twofold symmetry of the nucleosome core.

The protein localises to the nucleus. It localises to the chromosome. Plays an important role in the functional organization of mitotic chromosomes. Exhibits low basal ATPase activity, and unable to polymerize. Functionally, proposed core component of the chromatin remodeling INO80 complex which is involved in transcriptional regulation, DNA replication and probably DNA repair. Required for the recruitment of INO80 (and probably the INO80 complex) to sites of DNA damage Strongly prefer nucleosomes and H3-H4 tetramers over H2A-H2B dimers, suggesting it may act as a nucleosome recognition module within the complex. The protein is Actin-related protein 8 (actr8) of Danio rerio (Zebrafish).